Reading from the N-terminus, the 249-residue chain is Probable transcriptional regulatory protein DICTH_1505 (249 aa).

This sequence belongs to the TACO1 family.

Its subcellular location is the cytoplasm. The chain is Probable transcriptional regulatory protein DICTH_1505 from Dictyoglomus thermophilum (strain ATCC 35947 / DSM 3960 / H-6-12).